The chain runs to 94 residues: Acylphosphatase (94 aa).

Residues arginine 3–tyrosine 90 enclose the Acylphosphatase-like domain. Catalysis depends on residues arginine 18 and asparagine 36.

This sequence belongs to the acylphosphatase family.

It carries out the reaction an acyl phosphate + H2O = a carboxylate + phosphate + H(+). The chain is Acylphosphatase (acyP) from Geobacillus thermodenitrificans (strain NG80-2).